Here is a 176-residue protein sequence, read N- to C-terminus: Large ribosomal subunit protein uL6 (176 aa).

Belongs to the universal ribosomal protein uL6 family. In terms of assembly, part of the 50S ribosomal subunit.

Functionally, this protein binds to the 23S rRNA, and is important in its secondary structure. It is located near the subunit interface in the base of the L7/L12 stalk, and near the tRNA binding site of the peptidyltransferase center. In Paraburkholderia phytofirmans (strain DSM 17436 / LMG 22146 / PsJN) (Burkholderia phytofirmans), this protein is Large ribosomal subunit protein uL6.